We begin with the raw amino-acid sequence, 451 residues long: Signal transduction histidine-protein kinase ArlS (451 aa).

2 consecutive transmembrane segments (helical) span residues 11-31 (IIVT…IIIF) and 156-176 (IIAL…SYVF). Residues 178 to 231 (TQITKPLVSLSNKMIEIRRDGFQNKLQLNTNYEEIDNLANTFNEMMSQIEESFN) enclose the HAMP domain. Residues 239 to 451 (DASHELRTPL…NKGTTFKIIF (213 aa)) form the Histidine kinase domain. Position 242 is a phosphohistidine; by autocatalysis (His242).

Post-translationally, autophosphorylated.

Its subcellular location is the cell membrane. The enzyme catalyses ATP + protein L-histidine = ADP + protein N-phospho-L-histidine.. Its function is as follows. Member of the two-component regulatory system ArlS/ArlR involved in the regulation of adhesion, autolysis, multidrug resistance and virulence. ArlS probably functions as a sensor protein kinase which is autophosphorylated at a histidine residue and transfers its phosphate group to ArlR. In Staphylococcus aureus (strain MRSA252), this protein is Signal transduction histidine-protein kinase ArlS (arlS).